The chain runs to 76 residues: MGGLSIWHWLIVLLIVALVFGTKKLRNIGNDLGSAVKGFKDGMKEGETPADAQQLPRSGAVDVNAKETTRSDSNKA.

A helical membrane pass occupies residues 1 to 21; the sequence is MGGLSIWHWLIVLLIVALVFG. Residues 40–76 are disordered; it reads KDGMKEGETPADAQQLPRSGAVDVNAKETTRSDSNKA. A compositionally biased stretch (basic and acidic residues) spans 64 to 76; the sequence is NAKETTRSDSNKA.

This sequence belongs to the TatA/E family. In terms of assembly, the Tat system comprises two distinct complexes: a TatABC complex, containing multiple copies of TatA, TatB and TatC subunits, and a separate TatA complex, containing only TatA subunits. Substrates initially bind to the TatABC complex, which probably triggers association of the separate TatA complex to form the active translocon.

It is found in the cell inner membrane. Part of the twin-arginine translocation (Tat) system that transports large folded proteins containing a characteristic twin-arginine motif in their signal peptide across membranes. TatA could form the protein-conducting channel of the Tat system. The sequence is that of Sec-independent protein translocase protein TatA from Burkholderia cenocepacia (strain HI2424).